Reading from the N-terminus, the 137-residue chain is ATP synthase epsilon chain, chloroplastic (137 aa).

It belongs to the ATPase epsilon chain family. In terms of assembly, F-type ATPases have 2 components, CF(1) - the catalytic core - and CF(0) - the membrane proton channel. CF(1) has five subunits: alpha(3), beta(3), gamma(1), delta(1), epsilon(1). CF(0) has three main subunits: a, b and c.

The protein localises to the plastid. The protein resides in the chloroplast thylakoid membrane. Produces ATP from ADP in the presence of a proton gradient across the membrane. In Medicago sativa (Alfalfa), this protein is ATP synthase epsilon chain, chloroplastic.